The following is a 487-amino-acid chain: ESCRT-I complex subunit vps23 (487 aa).

Residues 428–487 (SERELKYYELKRKDEKLDEGIRALNQALHHESIMPASWLKGIKLLARQQFLIRDEMLQYS) enclose the SB domain.

As to quaternary structure, component of the ESCRT-I complex (endosomal sorting complex required for transport I).

The protein localises to the cytoplasm. The protein resides in the endosome. It is found in the late endosome membrane. Its function is as follows. Component of the ESCRT-I complex, a regulator of vesicular trafficking process. Binds to ubiquitinated cargo proteins and is required for the sorting of endocytic ubiquitinated cargos into multivesicular bodies (MVBs). Mediates the association to the ESCRT-0 complex. The sequence is that of ESCRT-I complex subunit vps23 (sst6) from Schizosaccharomyces pombe (strain 972 / ATCC 24843) (Fission yeast).